Here is a 308-residue protein sequence, read N- to C-terminus: Mycothiol acetyltransferase (308 aa).

Residue glutamate 44 participates in 1D-myo-inositol 2-(L-cysteinylamino)-2-deoxy-alpha-D-glucopyranoside binding. 83-85 is an acetyl-CoA binding site; sequence AVV. Residues 161 to 308 form the N-acetyltransferase domain; that stretch reads VRLRTYAGSA…DVAYGRPEGD (148 aa). Glutamate 188, lysine 230, and glutamate 238 together coordinate 1D-myo-inositol 2-(L-cysteinylamino)-2-deoxy-alpha-D-glucopyranoside. Residues 242–244 and 249–255 each bind acetyl-CoA; these read VGV and QGRGLGR. Tyrosine 276 is a binding site for 1D-myo-inositol 2-(L-cysteinylamino)-2-deoxy-alpha-D-glucopyranoside. 281-286 provides a ligand contact to acetyl-CoA; it reads NTAALH.

Belongs to the acetyltransferase family. MshD subfamily. In terms of assembly, monomer.

It carries out the reaction 1D-myo-inositol 2-(L-cysteinylamino)-2-deoxy-alpha-D-glucopyranoside + acetyl-CoA = mycothiol + CoA + H(+). In terms of biological role, catalyzes the transfer of acetyl from acetyl-CoA to desacetylmycothiol (Cys-GlcN-Ins) to form mycothiol. This Gordonia bronchialis (strain ATCC 25592 / DSM 43247 / BCRC 13721 / JCM 3198 / KCTC 3076 / NBRC 16047 / NCTC 10667) (Rhodococcus bronchialis) protein is Mycothiol acetyltransferase.